The following is a 307-amino-acid chain: Leucine-rich repeat-containing protein 59 (307 aa).

The Cytoplasmic portion of the chain corresponds to 1 to 247 (MARANGRSQN…LAQRQSRLRK (247 aa)). 5 LRR repeats span residues 10 to 31 (NLRD…SEVP), 40 to 61 (KATA…FCNL), 63 to 84 (HIVR…FGRL), 86 to 107 (NLQH…FAQL), and 109 to 131 (SLKW…AGDC). Residues 156–222 (EIELQRKLQL…LNSNKKAEEE (67 aa)) adopt a coiled-coil conformation. Residues 170-238 (KKKLEAKQRV…RMATPKEKKL (69 aa)) form a disordered region. Composition is skewed to basic and acidic residues over residues 174 to 187 (EAKQ…EREM) and 194 to 238 (QQKE…EKKL). A helical membrane pass occupies residues 248 to 268 (IACILLFGLLVVLLVVVACRF). Residues 269-307 (TDLKAINMCTSVNAIYKETLSALHSNPVLERFLQDPSSQ) are Lumenal-facing.

In terms of assembly, interacts with SGO1.

It localises to the microsome membrane. The protein localises to the endoplasmic reticulum membrane. The protein resides in the nucleus envelope. Required for nuclear import of FGF1. This is Leucine-rich repeat-containing protein 59 (lrrc59) from Xenopus laevis (African clawed frog).